Here is a 365-residue protein sequence, read N- to C-terminus: Histidinol-phosphate aminotransferase (365 aa).

The residue at position 222 (lysine 222) is an N6-(pyridoxal phosphate)lysine.

This sequence belongs to the class-II pyridoxal-phosphate-dependent aminotransferase family. Histidinol-phosphate aminotransferase subfamily. Homodimer. It depends on pyridoxal 5'-phosphate as a cofactor.

It carries out the reaction L-histidinol phosphate + 2-oxoglutarate = 3-(imidazol-4-yl)-2-oxopropyl phosphate + L-glutamate. It functions in the pathway amino-acid biosynthesis; L-histidine biosynthesis; L-histidine from 5-phospho-alpha-D-ribose 1-diphosphate: step 7/9. In Geobacillus sp. (strain WCH70), this protein is Histidinol-phosphate aminotransferase.